Reading from the N-terminus, the 95-residue chain is Co-chaperonin GroES (95 aa).

This sequence belongs to the GroES chaperonin family. As to quaternary structure, heptamer of 7 subunits arranged in a ring. Interacts with the chaperonin GroEL.

It is found in the cytoplasm. Its function is as follows. Together with the chaperonin GroEL, plays an essential role in assisting protein folding. The GroEL-GroES system forms a nano-cage that allows encapsulation of the non-native substrate proteins and provides a physical environment optimized to promote and accelerate protein folding. GroES binds to the apical surface of the GroEL ring, thereby capping the opening of the GroEL channel. The sequence is that of Co-chaperonin GroES from Desulfosudis oleivorans (strain DSM 6200 / JCM 39069 / Hxd3) (Desulfococcus oleovorans).